A 162-amino-acid polypeptide reads, in one-letter code: Protein-export protein SecB 2 (162 aa).

The protein belongs to the SecB family. As to quaternary structure, homotetramer, a dimer of dimers. One homotetramer interacts with 1 SecA dimer.

The protein localises to the cytoplasm. Its function is as follows. One of the proteins required for the normal export of preproteins out of the cell cytoplasm. It is a molecular chaperone that binds to a subset of precursor proteins, maintaining them in a translocation-competent state. It also specifically binds to its receptor SecA. The polypeptide is Protein-export protein SecB 2 (Polaromonas naphthalenivorans (strain CJ2)).